Consider the following 63-residue polypeptide: MKATELRDKSAQQLNEQLLELLRDQFNLRMQKATGQLGQSHLLSQVKRDIARVKTVLSQQAGK.

Belongs to the universal ribosomal protein uL29 family.

The protein is Large ribosomal subunit protein uL29 of Ectopseudomonas mendocina (strain ymp) (Pseudomonas mendocina).